Here is a 270-residue protein sequence, read N- to C-terminus: Orotidine 5'-phosphate decarboxylase (270 aa).

Substrate contacts are provided by residues D43, 65-67, 96-105, Y217, and R236; these read KTH and DRKFGDIGST. K98 serves as the catalytic Proton donor.

This sequence belongs to the OMP decarboxylase family.

It carries out the reaction orotidine 5'-phosphate + H(+) = UMP + CO2. Its pathway is pyrimidine metabolism; UMP biosynthesis via de novo pathway; UMP from orotate: step 2/2. This chain is Orotidine 5'-phosphate decarboxylase (URA3), found in Aureobasidium pullulans (Black yeast).